Consider the following 321-residue polypeptide: GDP-L-fucose synthase (321 aa).

NADP(+) is bound at residue 14-20; sequence GGSGLVG. The active-site Proton donor/acceptor is Tyr143. NADP(+)-binding positions include Lys147, 170 to 173, and His186; that span reads PTNV. The substrate site is built by Lys194, Trp208, Arg215, and Asp277.

Belongs to the NAD(P)-dependent epimerase/dehydratase family. Fucose synthase subfamily. As to quaternary structure, homodimer.

It carries out the reaction GDP-beta-L-fucose + NADP(+) = GDP-4-dehydro-alpha-D-rhamnose + NADPH + H(+). It participates in nucleotide-sugar biosynthesis; GDP-L-fucose biosynthesis via de novo pathway; GDP-L-fucose from GDP-alpha-D-mannose: step 2/2. Catalyzes the two-step NADP-dependent conversion of GDP-4-dehydro-6-deoxy-D-mannose to GDP-fucose, involving an epimerase and a reductase reaction. The sequence is that of GDP-L-fucose synthase (GFUS) from Cricetulus griseus (Chinese hamster).